A 350-amino-acid polypeptide reads, in one-letter code: Renin receptor (350 aa).

The signal sequence occupies residues 1–16; sequence MAVFVVLLALVAGVLG. Over 17-302 the chain is Extracellular; the sequence is NEFSILKSPG…YNLAYKYNFE (286 aa). Residues 303 to 323 form a helical membrane-spanning segment; that stretch reads YSVVFNMVLWIMIALALAVII. Topologically, residues 324 to 350 are cytoplasmic; the sequence is TSYNIWNMDPGYDSIIYRMTNQKIRMD. Positions 346–350 match the Mediates retrograde transport to the ER motif; that stretch reads KIRMD.

Interacts with renin. Accessory component of the multisubunit proton-transporting vacuolar (V)-ATPase protein pump. Interacts (via N-terminus) with ATP6AP1 (via N-terminus). Interacts with ATP6V0D1; ATP6V0D1 is a V-ATPase complex subunit and the interaction promotes V-ATPase complex assembly. Interacts with TMEM9; TMEM9 is a V-ATPase assembly regulator and the interaction induces the interaction with ATP6V0D1. Interacts with VMA21 (via N-terminus); VMA21 is a V-ATPase accessory component. Phosphorylated. In terms of processing, proteolytically cleaved by a furin-like convertase in the trans-Golgi network to generate N- and C-terminal fragments. Expressed in brain, heart, placenta, liver, kidney and pancreas. Barely detectable in lung and skeletal muscles. In the kidney cortex it is restricted to the mesangium of glomeruli. In the coronary and kidney artery it is expressed in the subendothelium, associated to smooth muscles where it colocalizes with REN. Expressed in vascular structures and by syncytiotrophoblast cells in the mature fetal placenta.

It is found in the endoplasmic reticulum membrane. The protein resides in the lysosome membrane. The protein localises to the cytoplasmic vesicle. It localises to the autophagosome membrane. Its subcellular location is the cell projection. It is found in the dendritic spine membrane. The protein resides in the axon. The protein localises to the endosome membrane. It localises to the clathrin-coated vesicle membrane. Its subcellular location is the secretory vesicle. It is found in the synaptic vesicle membrane. Multifunctional protein which functions as a renin, prorenin cellular receptor and is involved in the assembly of the lysosomal proton-transporting V-type ATPase (V-ATPase) and the acidification of the endo-lysosomal system. May mediate renin-dependent cellular responses by activating ERK1 and ERK2. By increasing the catalytic efficiency of renin in AGT/angiotensinogen conversion to angiotensin I, may also play a role in the renin-angiotensin system (RAS). Through its function in V-type ATPase (v-ATPase) assembly and acidification of the lysosome it regulates protein degradation and may control different signaling pathways important for proper brain development, synapse morphology and synaptic transmission. This chain is Renin receptor, found in Homo sapiens (Human).